Consider the following 205-residue polypeptide: UPF0111 protein YkaA (205 aa).

This sequence belongs to the UPF0111 family.

The chain is UPF0111 protein YkaA (ykaA) from Bacillus subtilis (strain 168).